A 327-amino-acid chain; its full sequence is Zinc transport protein ZntB (327 aa).

The Cytoplasmic portion of the chain corresponds to 1 to 273; the sequence is MDAIKGSELQ…ARRTYTMSLM (273 aa). Residues 274 to 294 traverse the membrane as a helical segment; sequence AMVFLPSTFLTGLFGVNLGGI. At 295-300 the chain is on the periplasmic side; it reads PGNSWH. Residues 301 to 321 traverse the membrane as a helical segment; it reads LGFSLFCLMLVVVIGGVAWWL. Topologically, residues 322–327 are cytoplasmic; sequence HRSKWL.

It belongs to the CorA metal ion transporter (MIT) (TC 1.A.35) family.

The protein localises to the cell inner membrane. It carries out the reaction Zn(2+)(out) + H(+)(out) = Zn(2+)(in) + H(+)(in). Zinc transporter. Acts as a Zn(2+):proton symporter, which likely mediates zinc ion uptake. The polypeptide is Zinc transport protein ZntB (Klebsiella pneumoniae subsp. pneumoniae (strain ATCC 700721 / MGH 78578)).